The sequence spans 441 residues: Dolichyl-diphosphooligosaccharide--protein glycosyltransferase 48 kDa subunit (441 aa).

An N-terminal signal peptide occupies residues 1–28 (MATALSGGFSKNALFILSAALMLQAVLG). Topologically, residues 29–410 (DGKTLVLLDN…TQYERFIPSA (382 aa)) are lumenal. Residues 411-431 (FPYYASAFSMMAGLFVFSVVF) traverse the membrane as a helical segment. At 432-441 (LHMREKEKSD) the chain is on the cytoplasmic side.

It belongs to the DDOST 48 kDa subunit family. Component of the oligosaccharyltransferase (OST) complex.

It is found in the endoplasmic reticulum membrane. Its pathway is protein modification; protein glycosylation. Its function is as follows. Subunit of the oligosaccharyl transferase (OST) complex that catalyzes the initial transfer of a defined glycan (Glc(3)Man(9)GlcNAc(2) in eukaryotes) from the lipid carrier dolichol-pyrophosphate to an asparagine residue within an Asn-X-Ser/Thr consensus motif in nascent polypeptide chains, the first step in protein N-glycosylation. N-glycosylation occurs cotranslationally and the complex associates with the Sec61 complex at the channel-forming translocon complex that mediates protein translocation across the endoplasmic reticulum (ER). All subunits are required for a maximal enzyme activity. Required for the assembly of both SST3A- and SS3B-containing OST complexes. This Danio rerio (Zebrafish) protein is Dolichyl-diphosphooligosaccharide--protein glycosyltransferase 48 kDa subunit.